Reading from the N-terminus, the 472-residue chain is Karilysin (472 aa).

Positions 1-20 (MKRFILLFFLSTIAIFKVYS) are cleaved as a signal peptide. A propeptide spans 21 to 34 (QRLYDNGPLTGDNN) (activation peptide). Zn(2+)-binding residues include histidine 102, aspartate 104, histidine 117, histidine 133, and histidine 155. Glutamate 156 acts as the Proton donor/acceptor in catalysis. Zn(2+) contacts are provided by histidine 159 and histidine 165. The propeptide at 196 to 386 (YGYPFSISGP…AVSCSRTISP (191 aa)) is removed in short form. Residues 387–472 (FTLSPNPATD…QTYTQKLIKK (86 aa)) constitute a propeptide, removed in long form.

This sequence belongs to the peptidase M10A family. The cofactor is Zn(2+). Post-translationally, processes itself into the mature 18-kDa enzyme (Kly18) through sequential autoproteolytic cleavage at both the N- and C-termini. However, the maturation intermediate Kly38 is found to be more active than Kly18 and the rate for its processing is slow, which raises the question as to whether Kly38 is a physiologically relevant entity.

The protein localises to the secreted. With respect to regulation, autoprocessing and proteolytic activity are completely inhibited by EDTA and 1,10-phenanthroline in vitro. Proteolytic activity is 3-fold enhanced by Ca(2+) due to stabilization of the protein structure but inhibited by an excess of Zn(2+). Inhibitory studies of karilysin identified several phage display-selected peptides with apparent inhibition constants (Ki) in the micromolar range, among which is the tetrapeptide SWFP (Ki=10.7 uM). Metalloprotease able to cleave casein, gelatin, elastin, fibrinogen and fibronectin. Shows exclusive preference for hydrophobic residues, especially Leu, Tyr and Met, at the P1' position of substrates, and for Pro or Ala at P3. Can efficiently cleave the antimicrobial peptide LL-37 which is a component of the immune system, leading to a significant reduction of its bactericidal activity. Is also able to inhibit all pathways of the human complement system. The classical and lectin complement pathways are inhibited because of the efficient degradation of mannose-binding lectin, ficolin-2, ficolin-3, and C4 by karilysin, whereas inhibition of the terminal pathway is caused by cleavage of C5. Thus, karilysin appears to be a major virulence factor of T.forsythia that contributes to evasion of the human immune response and periodontal disease. Seems to act synergistically with gingipains from the periodontal pathogen P.gingivalis present at the same sites of infection. This Tannerella forsythia (strain ATCC 43037 / JCM 10827 / CCUG 21028 A / KCTC 5666 / FDC 338) (Bacteroides forsythus) protein is Karilysin (kly).